Reading from the N-terminus, the 319-residue chain is D-galacturonate reductase (319 aa).

The Proton donor role is filled by Tyr58. Residue His121 participates in substrate binding. Residue 216–275 coordinates NADP(+); it reads SPLGAARTKWGDDRVLGSDIIEEIAQAKGKSTAQISLRWVYEQGVSIVTKSYNKERMRQN.

Belongs to the aldo/keto reductase family. Expressed specifically in the receptacle tissue of the fruit.

The enzyme catalyses L-galactonate + NADP(+) = aldehydo-D-galacturonate + NADPH + H(+). Its pathway is cofactor biosynthesis; L-ascorbate biosynthesis. Involved in ascorbic acid (vitamin C) biosynthesis. The chain is D-galacturonate reductase (GALUR) from Fragaria ananassa (Strawberry).